Here is an 873-residue protein sequence, read N- to C-terminus: Leucine--tRNA ligase (873 aa).

Residues 42-52 (PYPSGKLHMGH) carry the 'HIGH' region motif. Residues 628-632 (KMAKS) carry the 'KMSKS' region motif. Lysine 631 serves as a coordination point for ATP.

This sequence belongs to the class-I aminoacyl-tRNA synthetase family.

The protein resides in the cytoplasm. The enzyme catalyses tRNA(Leu) + L-leucine + ATP = L-leucyl-tRNA(Leu) + AMP + diphosphate. The sequence is that of Leucine--tRNA ligase from Aromatoleum aromaticum (strain DSM 19018 / LMG 30748 / EbN1) (Azoarcus sp. (strain EbN1)).